The primary structure comprises 155 residues: Myelin basic protein (155 aa).

2 disordered regions span residues 1–70 (MASA…GRQT) and 109–155 (TDGQ…PARR). Ala2 carries the N-acetylalanine modification. 2 stretches are compositionally biased toward basic and acidic residues: residues 37-49 (GSRKVPEKGKEPA) and 123-134 (KSKEAYRGRRDG).

Belongs to the myelin basic protein family.

It is found in the myelin membrane. Functionally, this protein may function to maintain proper structure of myelin. In Heterodontus francisci (Horn shark), this protein is Myelin basic protein (MBP).